The following is a 438-amino-acid chain: Citrate synthase (438 aa).

Active-site residues include His306 and Asp364.

Belongs to the citrate synthase family.

It carries out the reaction oxaloacetate + acetyl-CoA + H2O = citrate + CoA + H(+). It participates in carbohydrate metabolism; tricarboxylic acid cycle; isocitrate from oxaloacetate: step 1/2. The polypeptide is Citrate synthase (gltA) (Bartonella quintana (strain Toulouse) (Rochalimaea quintana)).